Reading from the N-terminus, the 228-residue chain is Calcyclin-binding protein (228 aa).

Ala-2 carries the post-translational modification N-acetylalanine. The interval 2–80 (ASEELQKDLE…YTVKISNYGW (79 aa)) is interaction with SIAH1. Ser-3 is modified (phosphoserine). N6-acetyllysine is present on residues Lys-8 and Lys-19. At Ser-34 the chain carries Phosphoserine. The CS domain maps to 73–167 (VKISNYGWDQ…VENTRWDYLT (95 aa)). An interaction with SKP1 region spans residues 73-228 (VKISNYGWDQ…EKQAKGDTEF (156 aa)). Residues Lys-85 and Lys-118 each carry the N6-acetyllysine modification. An interaction with S100A6 region spans residues 154–228 (CRKKVENTRW…EKQAKGDTEF (75 aa)). One can recognise an SGS domain in the interval 168-228 (QVEKERKEKE…EKQAKGDTEF (61 aa)).

Interacts with protein of the S100 family S100A1, S100A6, S100B, S100P and S100A12 in a calcium-dependent manner. Component of some large E3 complex at least composed of UBE2D1, SIAH1, CACYBP/SIP, SKP1, APC and TBL1X. Interacts directly with SIAH1, SIAH2 and SKP1. In terms of processing, phosphorylated on serine residues. Phosphorylated upon induction by RA or at high calcium concentrations.

It is found in the cytoplasm. The protein resides in the nucleus. May be involved in calcium-dependent ubiquitination and subsequent proteasomal degradation of target proteins. Probably serves as a molecular bridge in ubiquitin E3 complexes. Participates in the ubiquitin-mediated degradation of beta-catenin (CTNNB1). This is Calcyclin-binding protein (CACYBP) from Pongo abelii (Sumatran orangutan).